A 221-amino-acid chain; its full sequence is Small ribosomal subunit protein uS5 (221 aa).

The S5 DRBM domain occupies 46–109 (IKDEVIDIKR…INAKLNIMEI (64 aa)).

This sequence belongs to the universal ribosomal protein uS5 family. In terms of assembly, part of the 30S ribosomal subunit. Contacts protein S4.

Functionally, with S4 and S12 plays an important role in translational accuracy. This Thermoplasma volcanium (strain ATCC 51530 / DSM 4299 / JCM 9571 / NBRC 15438 / GSS1) protein is Small ribosomal subunit protein uS5.